The sequence spans 224 residues: PKHD-type hydroxylase Shewmr4_3244 (224 aa).

Positions 78–176 (QFYPPLFNRY…RTAAFMWLQS (99 aa)) constitute a Fe2OG dioxygenase domain. His96, Asp98, and His157 together coordinate Fe cation. A 2-oxoglutarate-binding site is contributed by Arg167.

Requires Fe(2+) as cofactor. L-ascorbate is required as a cofactor.

This Shewanella sp. (strain MR-4) protein is PKHD-type hydroxylase Shewmr4_3244.